The chain runs to 440 residues: C4-dicarboxylate transport protein (440 aa).

The next 8 helical transmembrane spans lie at 8 to 28 (LYLQ…LFPA), 40 to 60 (FIKL…VTGI), 74 to 94 (LKGL…GLVV), 147 to 167 (GDIL…AALK), 187 to 207 (IVGF…AFTV), 221 to 241 (LIAC…GLVL), 288 to 308 (VVGL…SIYL), and 354 to 374 (AATL…LLGV). The tract at residues 419–440 (EEVEPANEPEPPAIPAGAGLHG) is disordered.

Belongs to the dicarboxylate/amino acid:cation symporter (DAACS) (TC 2.A.23) family.

Its subcellular location is the cell inner membrane. In terms of biological role, responsible for the transport of dicarboxylates such as succinate, fumarate, and malate from the periplasm across the membrane. The sequence is that of C4-dicarboxylate transport protein from Anaeromyxobacter sp. (strain K).